Here is a 178-residue protein sequence, read N- to C-terminus: Large ribosomal subunit protein uL6 (178 aa).

It belongs to the universal ribosomal protein uL6 family. As to quaternary structure, part of the 50S ribosomal subunit.

In terms of biological role, this protein binds to the 23S rRNA, and is important in its secondary structure. It is located near the subunit interface in the base of the L7/L12 stalk, and near the tRNA binding site of the peptidyltransferase center. In Francisella tularensis subsp. tularensis (strain FSC 198), this protein is Large ribosomal subunit protein uL6.